We begin with the raw amino-acid sequence, 429 residues long: Adenylosuccinate synthetase (429 aa).

GTP contacts are provided by residues 12–18 (GDEGKGK) and 40–42 (GHT). The active-site Proton acceptor is Asp-13. Mg(2+)-binding residues include Asp-13 and Gly-40. Residues 13–16 (DEGK), 38–41 (NAGH), Thr-129, Arg-143, Gln-223, Thr-238, and Arg-302 contribute to the IMP site. The Proton donor role is filled by His-41. Residue 298-304 (TVTGRPR) participates in substrate binding. Residues Arg-304, 330–332 (KLD), and 412–414 (STS) each bind GTP.

Belongs to the adenylosuccinate synthetase family. As to quaternary structure, homodimer. Requires Mg(2+) as cofactor.

The protein resides in the cytoplasm. The enzyme catalyses IMP + L-aspartate + GTP = N(6)-(1,2-dicarboxyethyl)-AMP + GDP + phosphate + 2 H(+). It functions in the pathway purine metabolism; AMP biosynthesis via de novo pathway; AMP from IMP: step 1/2. Functionally, plays an important role in the de novo pathway of purine nucleotide biosynthesis. Catalyzes the first committed step in the biosynthesis of AMP from IMP. This Gluconobacter oxydans (strain 621H) (Gluconobacter suboxydans) protein is Adenylosuccinate synthetase.